We begin with the raw amino-acid sequence, 242 residues long: MSKTDNIYSKRRAQIDGFSFDEQVVQVFPDMIKRSVPGYETIINSIGTITERCAVENSNLYDLGCSLGAATLSMRRGLNKAGCQIIAVDNSQQMVERCEQYIHAYKSDTPVQVLCDDICNIHIENASVVILNFTLQFLTPEKRLNLLTNIYNGLLPGGVLVLSEKFVFEDPLNHQLLNDLHLDFKRSQGYSELEISQKRASLDNVLIADTVEQHYLRLRKAGFKHNNLWYQYFNFGSIISIK.

S-adenosyl-L-methionine-binding positions include Tyr39, 64–66 (GCS), 89–90 (DN), 117–118 (DI), Asn132, and Arg199.

The protein belongs to the class I-like SAM-binding methyltransferase superfamily. Cx-SAM synthase family. In terms of assembly, homodimer.

The catalysed reaction is prephenate + S-adenosyl-L-methionine = carboxy-S-adenosyl-L-methionine + 3-phenylpyruvate + H2O. Functionally, catalyzes the conversion of S-adenosyl-L-methionine (SAM) to carboxy-S-adenosyl-L-methionine (Cx-SAM). The polypeptide is Carboxy-S-adenosyl-L-methionine synthase (Psychromonas ingrahamii (strain DSM 17664 / CCUG 51855 / 37)).